The chain runs to 148 residues: Snaclec B1 (148 aa).

The N-terminal stretch at 1-24 (MGRIIFVSFGLLVVFLSLSGTGAA) is a signal peptide. Disulfide bonds link Cys-27–Cys-38, Cys-55–Cys-144, and Cys-121–Cys-136. Residues 34 to 145 (YDQHCYKVFD…CRLLGHFVCK (112 aa)) form the C-type lectin domain.

The protein belongs to the snaclec family. Heterodimer; disulfide-linked. Expressed by the venom gland.

The protein localises to the secreted. Its function is as follows. Interferes with one step of hemostasis (modulation of platelet aggregation, or coagulation cascade, for example). In Macrovipera lebetinus (Levantine viper), this protein is Snaclec B1.